The chain runs to 416 residues: CinA-like protein (416 aa).

It belongs to the CinA family.

The sequence is that of CinA-like protein from Synechocystis sp. (strain ATCC 27184 / PCC 6803 / Kazusa).